Consider the following 330-residue polypeptide: DNA repair and recombination protein RadA (330 aa).

124–131 contacts ATP; that stretch reads GEFGSGKT.

It belongs to the eukaryotic RecA-like protein family.

Involved in DNA repair and in homologous recombination. Binds and assemble on single-stranded DNA to form a nucleoprotein filament. Hydrolyzes ATP in a ssDNA-dependent manner and promotes DNA strand exchange between homologous DNA molecules. In Pyrobaculum neutrophilum (strain DSM 2338 / JCM 9278 / NBRC 100436 / V24Sta) (Thermoproteus neutrophilus), this protein is DNA repair and recombination protein RadA.